Here is a 505-residue protein sequence, read N- to C-terminus: Glutamate--tRNA ligase (505 aa).

The 'HIGH' region motif lies at 12–22 (PSPTGPLHIGG). A 'KMSKS' region motif is present at residues 260–264 (KLSKR). Position 263 (Lys-263) interacts with ATP.

This sequence belongs to the class-I aminoacyl-tRNA synthetase family. Glutamate--tRNA ligase type 1 subfamily. Monomer.

Its subcellular location is the cytoplasm. It carries out the reaction tRNA(Glu) + L-glutamate + ATP = L-glutamyl-tRNA(Glu) + AMP + diphosphate. In terms of biological role, catalyzes the attachment of glutamate to tRNA(Glu) in a two-step reaction: glutamate is first activated by ATP to form Glu-AMP and then transferred to the acceptor end of tRNA(Glu). This Porphyromonas gingivalis (strain ATCC BAA-308 / W83) protein is Glutamate--tRNA ligase.